Here is a 714-residue protein sequence, read N- to C-terminus: Delta-like protein 1 (714 aa).

The N-terminal stretch at 1 to 17 (MGRRSALALAVVSALLC) is a signal peptide. The Extracellular portion of the chain corresponds to 18 to 537 (QVWSSGVFEL…VAAQGGSFPW (520 aa)). The DSL domain occupies 176-220 (FVCDEHYYGEGCSVFCRPRDDAFGHFTCGERGEKMCDPGWKGQYC). 27 disulfide bridges follow: Cys-178-Cys-187, Cys-191-Cys-203, Cys-211-Cys-220, Cys-225-Cys-236, Cys-229-Cys-242, Cys-244-Cys-253, Cys-256-Cys-267, Cys-262-Cys-273, Cys-275-Cys-284, Cys-291-Cys-303, Cys-297-Cys-313, Cys-315-Cys-324, Cys-331-Cys-342, Cys-336-Cys-351, Cys-353-Cys-362, Cys-369-Cys-380, Cys-374-Cys-390, Cys-392-Cys-401, Cys-408-Cys-419, Cys-413-Cys-428, Cys-430-Cys-439, Cys-446-Cys-457, Cys-451-Cys-466, Cys-468-Cys-477, Cys-484-Cys-495, Cys-489-Cys-504, and Cys-506-Cys-515. EGF-like domains lie at 225–253 (CLPGCDDQHGYCDKPGECKCRVGWQGRYC), 256–284 (CIRYPGCLHGTCQQPWQCNCQEGWGGLFC), and 291–324 (CTHHKPCRNGATCTNTGQGSYTCSCRPGYTGANC). The EGF-like 4; calcium-binding domain occupies 331–362 (CAPSPCRNGGSCTDLEDSYSCTCPPGFYGKVC). EGF-like domains follow at residues 369-401 (CADGPCFNGGRCSDNPDGGYTCHCPAGFSGFNC) and 408-439 (CSSSPCSNGAKCVDLGNSYLCRCQTGFSGRYC). The region spanning 446–477 (CASSPCANGGTCRDSVNDFSCTCPPGYTGRNC) is the EGF-like 7; calcium-binding domain. Asn-476 carries N-linked (GlcNAc...) asparagine glycosylation. Residues 484 to 515 (CEHAPCHNGATCHQRGQRYMCECAQGYGGANC) form the EGF-like 8 domain. Residues 538–560 (VAVCAGVVLVLLLLLGCAAVVVC) traverse the membrane as a helical segment. Residues 561 to 714 (VRLKLQKHQP…KDECVIATEV (154 aa)) are Cytoplasmic-facing. Residue Lys-605 forms a Glycyl lysine isopeptide (Lys-Gly) (interchain with G-Cter in ubiquitin) linkage. Thr-630 carries the phosphothreonine modification. Residues 644–656 (ATVRDAHSKRDTK) show a composition bias toward basic and acidic residues. The segment at 644–690 (ATVRDAHSKRDTKCQSQGSVGEEKSTSTLRGGEVPDRKRPESVYSTS) is disordered. Ser-685 is subject to Phosphoserine; by PKB. Residue Ser-688 is modified to Phosphoserine. The tract at residues 711–714 (ATEV) is interaction with MAGI1.

Homodimer. Interacts with TJP1. Interacts with MAGI1 (via PDZ domain); forms a complex with CTNNB1 and CDH2 and promotes recruitment to the adherens junction and stabilization on the cell surface. Interacts with PSEN1; undergoes a presenilin-dependent gamma-secretase cleavage that releases a Dll1-intracellular form. Interacts with MFAP5. Interacts with MIB1. Interacts with NEURL1B; leads to ubiquitination. Interacts with NEURL1. Interacts with SYNJ2BP; enhances DLL1 protein stability, and promotes Notch signaling in endothelial cells. Interacts with MAGI1, MAGI2, MAGI3 and MPDZ. Interacts (via ubiquitin) with EPN1 (via IUM domain); binding with NOTCH1 attached to neighboring cell, promotes ligand ubiquitination and EPN1 interaction, leading to NECD transendocytosis and Notch signaling. Interacts with NOTCH1. Ubiquitinated by MIB (MIB1 or MIB2), leading to its endocytosis and subsequent degradation. Ubiquitinated; promotes recycling back to the plasma membrane and confers a strong affinity for NOTCH1. Mono- and multi-ubiquitinated. Multi-ubiquitination of Lys-605 by MIB1 promotes both cis and trans-interaction with NOTCH1, as well as activation of Notch signaling. Ubiquitinated by NEURL1B. Post-translationally, phosphorylated in a membrane association-dependent manner. Phosphorylation at Ser-688 requires the presence of Ser-685, whereas phosphorylation at Thr-630 and Ser-685 occur independently of the other sites. Phosphorylation is required for full ligand activity in vitro and affects surface presentation, ectodomain shedding, and endocytosis. In terms of processing, O-fucosylated. Can be elongated to a disaccharide by MFNG.

It is found in the apical cell membrane. The protein resides in the cell junction. The protein localises to the adherens junction. Its subcellular location is the membrane raft. Functionally, transmembrane ligand protein of NOTCH1, NOTCH2 and NOTCH3 receptors that binds the extracellular domain (ECD) of Notch receptor in a cis and trans fashion manner. Following transinteraction, ligand cells produce mechanical force that depends of a clathrin-mediated endocytosis, requiring ligand ubiquitination, EPN1 interaction, and actin polymerisation; these events promote Notch receptor extracellular domain (NECD) transendocytosis and triggers Notch signaling through induction of cleavage, hyperphosphorylation, and nuclear accumulation of the intracellular domain of Notch receptors (NICD). Is required for embryonic development and maintenance of adult stem cells in many different tissues and immune systeme; the DLL1-induced Notch signaling is mediated through an intercellular communication that regulates cell lineage, cell specification, cell patterning and morphogenesis through effects on differentiation and proliferation. Plays a role in brain development at different level, namely by regulating neuronal differentiation of neural precursor cells via cell-cell interaction, most likely through the lateral inhibitory system in an endogenous level dependent-manner. During neocortex development, Dll1-Notch signaling transmission is mediated by dynamic interactions between intermediate neurogenic progenitors and radial glia; the cell-cell interactions are mediated via dynamic and transient elongation processes, likely to reactivate/maintain Notch activity in neighboring progenitors, and coordinate progenitor cell division and differentiation across radial and zonal boundaries. During cerebellar development, regulates Bergmann glial monolayer formation and its morphological maturation through a Notch signaling pathway. At the retina and spinal cord level, regulates neurogenesis by preventing the premature differentiation of neural progenitors and also by maintaining progenitors in spinal cord through Notch signaling pathway. Also controls neurogenesis of the neural tube in a progenitor domain-specific fashion along the dorsoventral axis. Maintains quiescence of neural stem cells and plays a role as a fate determinant that segregates asymmetrically to one daughter cell during neural stem cells mitosis, resulting in neuronal differentiation in Dll1-inheriting cell. Plays a role in immune systeme development, namely the development of all T-cells and marginal zone (MZ) B cells. Blocks the differentiation of progenitor cells into the B-cell lineage while promoting the emergence of a population of cells with the characteristics of a T-cell/NK-cell precursor. Also plays a role during muscle development. During early development, inhibits myoblasts differentiation from the medial dermomyotomal lip and later regulates progenitor cell differentiation. Directly modulates cell adhesion and basal lamina formation in satellite cells through Notch signaling. Maintains myogenic progenitors pool by suppressing differentiation through down-regulation of MYOD1 and is required for satellite cell homing and PAX7 expression. During craniofacial and trunk myogenesis suppresses differentiation of cranial mesoderm-derived and somite-derived muscle via MYOD1 regulation but in cranial mesoderm-derived progenitors, is neither required for satellite cell homing nor for PAX7 expression. Also plays a role during pancreatic cell development. During type B pancreatic cell development, may be involved in the initiation of proximodistal patterning in the early pancreatic epithelium. Stimulates multipotent pancreatic progenitor cells proliferation and pancreatic growth by maintaining HES1 expression and PTF1A protein levels. During fetal stages of development, is required to maintain arterial identity and the responsiveness of arterial endothelial cells for VEGFA through regulation of KDR activation and NRP1 expression. Controls sprouting angiogenesis and subsequent vertical branch formation through regulation on tip cell differentiation. Negatively regulates goblet cell differentiation in intestine and controls secretory fat commitment through lateral inhibition in small intestine. Plays a role during inner ear development; negatively regulates auditory hair cell differentiation. Plays a role during nephron development through Notch signaling pathway. Regulates growth, blood pressure and energy homeostasis. The polypeptide is Delta-like protein 1 (Dll1) (Rattus norvegicus (Rat)).